Here is a 149-residue protein sequence, read N- to C-terminus: Protein K7 (149 aa).

The protein belongs to the orthopoxvirus OPG044 family. As to quaternary structure, interacts with DDX3; this interaction inhibits DDX3 and suppresses DDX3-mediated IFN-beta promoter induction. Interacts with TRAF6 and IRAK2; these interactions suppress TLR-dependent NF-KappaB activation.

The protein localises to the host cytoplasm. In terms of biological role, virulence factor that affects the acute immune response to infection. Bcl-2-like protein which, through its interaction with the DEAD box RNA helicase DDX3X/DDX3, prevents TBK1/IKKepsilon-mediated IRF3 activation. Contributes to virulence by binding to the host TRAF6 and IRAK2 and preventing host NF-kappa-B activation. This is Protein K7 (OPG044) from Homo sapiens (Human).